Here is a 282-residue protein sequence, read N- to C-terminus: Protoheme IX farnesyltransferase (282 aa).

9 helical membrane-spanning segments follow: residues 9-29, 39-59, 79-99, 102-122, 139-159, 165-185, 210-230, 231-251, and 261-281; these read LAKP…FLLA, LPLF…GCVF, LVTG…LLIL, LVLY…GFIV, VLGG…VVNI, LALF…IAML, IMLF…VLGS, ADLF…YKSI, and VFAK…CLTM.

This sequence belongs to the UbiA prenyltransferase family. Protoheme IX farnesyltransferase subfamily.

The protein resides in the cell inner membrane. The catalysed reaction is heme b + (2E,6E)-farnesyl diphosphate + H2O = Fe(II)-heme o + diphosphate. The protein operates within porphyrin-containing compound metabolism; heme O biosynthesis; heme O from protoheme: step 1/1. Converts heme B (protoheme IX) to heme O by substitution of the vinyl group on carbon 2 of heme B porphyrin ring with a hydroxyethyl farnesyl side group. This Francisella tularensis subsp. novicida (strain U112) protein is Protoheme IX farnesyltransferase.